The sequence spans 394 residues: Elongation factor Tu (394 aa).

The tr-type G domain occupies 10-204; that stretch reads KEHANIGTIG…AVDDYIPTPE (195 aa). The tract at residues 19 to 26 is G1; that stretch reads GHVDHGKT. 19–26 serves as a coordination point for GTP; it reads GHVDHGKT. T26 provides a ligand contact to Mg(2+). The G2 stretch occupies residues 60 to 64; that stretch reads GITIN. The tract at residues 81-84 is G3; it reads DCPG. Residues 81–85 and 136–139 each bind GTP; these read DCPGH and NKVD. The interval 136-139 is G4; the sequence is NKVD. The G5 stretch occupies residues 174 to 176; the sequence is SAL.

It belongs to the TRAFAC class translation factor GTPase superfamily. Classic translation factor GTPase family. EF-Tu/EF-1A subfamily. In terms of assembly, monomer.

It is found in the cytoplasm. The catalysed reaction is GTP + H2O = GDP + phosphate + H(+). GTP hydrolase that promotes the GTP-dependent binding of aminoacyl-tRNA to the A-site of ribosomes during protein biosynthesis. This chain is Elongation factor Tu, found in Staphylococcus epidermidis (strain ATCC 35984 / DSM 28319 / BCRC 17069 / CCUG 31568 / BM 3577 / RP62A).